A 281-amino-acid chain; its full sequence is Phosphatidylglycerol--prolipoprotein diacylglyceryl transferase (281 aa).

4 consecutive transmembrane segments (helical) span residues 23–43 (VGPL…MFAW), 71–91 (FVIW…VLFY), 107–127 (WDGG…MILF), and 133–153 (IKVW…LGVV). R154 lines the a 1,2-diacyl-sn-glycero-3-phospho-(1'-sn-glycerol) pocket. Transmembrane regions (helical) follow at residues 189–209 (LYEA…LVWV), 217–237 (GFIA…VEFF), and 247–267 (LFGG…LIGL).

This sequence belongs to the Lgt family.

It localises to the cell inner membrane. It carries out the reaction L-cysteinyl-[prolipoprotein] + a 1,2-diacyl-sn-glycero-3-phospho-(1'-sn-glycerol) = an S-1,2-diacyl-sn-glyceryl-L-cysteinyl-[prolipoprotein] + sn-glycerol 1-phosphate + H(+). It participates in protein modification; lipoprotein biosynthesis (diacylglyceryl transfer). In terms of biological role, catalyzes the transfer of the diacylglyceryl group from phosphatidylglycerol to the sulfhydryl group of the N-terminal cysteine of a prolipoprotein, the first step in the formation of mature lipoproteins. This is Phosphatidylglycerol--prolipoprotein diacylglyceryl transferase from Brucella anthropi (strain ATCC 49188 / DSM 6882 / CCUG 24695 / JCM 21032 / LMG 3331 / NBRC 15819 / NCTC 12168 / Alc 37) (Ochrobactrum anthropi).